The sequence spans 512 residues: MQQQKPLEGAQLVIMTIALSLATFMQVLDSTIANVAIPTIAGNLGSSLSQGTWVITSFGVANAISIPLTGWLAKRVGEVKLFLWSTIAFAIASWACGVSSSLNMLIFFRVIQGIVAGPLIPLSQSLLLNNYPPAKRSIALALWSMTVIVAPICGPILGGYISDNYHWGWIFFINVPIGVAVVLMTLQTLRGRETRTERRRIDAVGLALLVIGIGSLQIMLDRGKELDWFSSQEIIILTVVAVVAICFLIVWELTDDNPIVDLSLFKSRNFTIGCLCISLAYMLYFGAIVLLPQLLQEVYGYTATWAGLASAPVGIIPVILSPIIGRFAHKLDMRRLVTFSFIMYAVCFYWRAYTFEPGMDFGASAWPQFIQGFAVACFFMPLTTITLSGLPPERLAAASSLSNFTRTLAGSIGTSITTTMWTNRESMHHAQLTESVNPFNPNAQAMYSQLEGLGMTQQQASGWIAQQITNQGLIISANEIFWMSAGIFLVLLGLVWFAKPPFGAGGGGGGAH.

Over 1-12 (MQQQKPLEGAQL) the chain is Cytoplasmic. The helical transmembrane segment at 13–38 (VIMTIALSLATFMQVLDSTIANVAIP) threads the bilayer. Topologically, residues 39–51 (TIAGNLGSSLSQG) are extracellular. A helical transmembrane segment spans residues 52–72 (TWVITSFGVANAISIPLTGWL). Residues 73 to 81 (AKRVGEVKL) are Cytoplasmic-facing. A helical membrane pass occupies residues 82-100 (FLWSTIAFAIASWACGVSS). The Extracellular segment spans residues 101-109 (SLNMLIFFR). Residues 110-128 (VIQGIVAGPLIPLSQSLLL) form a helical membrane-spanning segment. Residues 129 to 136 (NNYPPAKR) lie on the Cytoplasmic side of the membrane. The helical transmembrane segment at 137-159 (SIALALWSMTVIVAPICGPILGG) threads the bilayer. Topologically, residues 160–164 (YISDN) are extracellular. Residues 165–189 (YHWGWIFFINVPIGVAVVLMTLQTL) form a helical membrane-spanning segment. At 190–202 (RGRETRTERRRID) the chain is on the cytoplasmic side. Residues 203–223 (AVGLALLVIGIGSLQIMLDRG) traverse the membrane as a helical segment. The Extracellular portion of the chain corresponds to 224–233 (KELDWFSSQE). The chain crosses the membrane as a helical span at residues 234–249 (IIILTVVAVVAICFLI). At 250–271 (VWELTDDNPIVDLSLFKSRNFT) the chain is on the cytoplasmic side. Residues 272–295 (IGCLCISLAYMLYFGAIVLLPQLL) traverse the membrane as a helical segment. Residues 296–305 (QEVYGYTATW) lie on the Extracellular side of the membrane. A helical membrane pass occupies residues 306–329 (AGLASAPVGIIPVILSPIIGRFAH). Over 330–335 (KLDMRR) the chain is Cytoplasmic. The chain crosses the membrane as a helical span at residues 336–355 (LVTFSFIMYAVCFYWRAYTF). The Extracellular portion of the chain corresponds to 356–363 (EPGMDFGA). Residues 364 to 387 (SAWPQFIQGFAVACFFMPLTTITL) form a helical membrane-spanning segment. At 388–407 (SGLPPERLAAASSLSNFTRT) the chain is on the cytoplasmic side. The helical transmembrane segment at 408–428 (LAGSIGTSITTTMWTNRESMH) threads the bilayer. The Extracellular portion of the chain corresponds to 429–481 (HAQLTESVNPFNPNAQAMYSQLEGLGMTQQQASGWIAQQITNQGLIISANEIF). A helical membrane pass occupies residues 482–504 (WMSAGIFLVLLGLVWFAKPPFGA). The Cytoplasmic segment spans residues 505-512 (GGGGGGAH).

Belongs to the major facilitator superfamily. EmrB family. Part of the tripartite efflux system EmrAB-TolC, which is composed of an inner membrane transporter, EmrB, a periplasmic membrane fusion protein, EmrA, and an outer membrane component, TolC. The complex forms a large protein conduit and can translocate molecules across both the inner and outer membranes. Interacts with EmrA.

The protein localises to the cell inner membrane. Its function is as follows. Part of the tripartite efflux system EmrAB-TolC, which confers resistance to antibiotics. The polypeptide is Multidrug export protein EmrB (emrB) (Escherichia coli O157:H7).